We begin with the raw amino-acid sequence, 559 residues long: Formate--tetrahydrofolate ligase (559 aa).

Position 68-75 (68-75) interacts with ATP; sequence TPAGEGKS.

It belongs to the formate--tetrahydrofolate ligase family.

It catalyses the reaction (6S)-5,6,7,8-tetrahydrofolate + formate + ATP = (6R)-10-formyltetrahydrofolate + ADP + phosphate. Its pathway is one-carbon metabolism; tetrahydrofolate interconversion. The protein is Formate--tetrahydrofolate ligase of Lactobacillus gasseri (strain ATCC 33323 / DSM 20243 / BCRC 14619 / CIP 102991 / JCM 1131 / KCTC 3163 / NCIMB 11718 / NCTC 13722 / AM63).